A 578-amino-acid chain; its full sequence is Isocitrate dehydrogenase kinase/phosphatase (578 aa).

Residues 315-321 (APGIRGM) and Lys-336 each bind ATP. Residue Asp-371 is part of the active site.

Belongs to the AceK family.

The protein resides in the cytoplasm. The catalysed reaction is L-seryl-[isocitrate dehydrogenase] + ATP = O-phospho-L-seryl-[isocitrate dehydrogenase] + ADP + H(+). In terms of biological role, bifunctional enzyme which can phosphorylate or dephosphorylate isocitrate dehydrogenase (IDH) on a specific serine residue. This is a regulatory mechanism which enables bacteria to bypass the Krebs cycle via the glyoxylate shunt in response to the source of carbon. When bacteria are grown on glucose, IDH is fully active and unphosphorylated, but when grown on acetate or ethanol, the activity of IDH declines drastically concomitant with its phosphorylation. This Escherichia coli O157:H7 protein is Isocitrate dehydrogenase kinase/phosphatase.